The sequence spans 334 residues: Adenosine deaminase (334 aa).

Residues His12 and His14 each coordinate Zn(2+). His14, Asp16, and Gly170 together coordinate substrate. His197 lines the Zn(2+) pocket. Glu200 (proton donor) is an active-site residue. Asp278 is a Zn(2+) binding site. Asp279 is a binding site for substrate.

It belongs to the metallo-dependent hydrolases superfamily. Adenosine and AMP deaminases family. Adenosine deaminase subfamily. Zn(2+) serves as cofactor.

It catalyses the reaction adenosine + H2O + H(+) = inosine + NH4(+). The catalysed reaction is 2'-deoxyadenosine + H2O + H(+) = 2'-deoxyinosine + NH4(+). In terms of biological role, catalyzes the hydrolytic deamination of adenosine and 2-deoxyadenosine. The chain is Adenosine deaminase from Yersinia pseudotuberculosis serotype IB (strain PB1/+).